Consider the following 92-residue polypeptide: MANIASAKKRARQAENNRAHNAALRSRLRTYIKKVILAVDSGDLTKAQEAFRQAVPIIDSSVNKGLIHRNKAARSKSRLNARVKALALQAAS.

The tract at residues Met-1–His-20 is disordered.

It belongs to the bacterial ribosomal protein bS20 family.

Binds directly to 16S ribosomal RNA. The chain is Small ribosomal subunit protein bS20 from Methylococcus capsulatus (strain ATCC 33009 / NCIMB 11132 / Bath).